The primary structure comprises 381 residues: Formate dehydrogenase, mitochondrial (381 aa).

The transit peptide at methionine 1–glutamate 25 directs the protein to the mitochondrion. Residues isoleucine 125 and asparagine 149 each contribute to the substrate site. NAD(+)-binding positions include threonine 150, arginine 204–isoleucine 205, aspartate 224, proline 259–lysine 263, asparagine 285, aspartate 311, and histidine 335–glycine 338.

Belongs to the D-isomer specific 2-hydroxyacid dehydrogenase family. FDH subfamily. As to quaternary structure, homodimer. In terms of tissue distribution, found at high levels in developing tubers, at intermediate level in stems, veins, stolons, and stamens, and at low level in leaves and roots.

The protein localises to the mitochondrion. It catalyses the reaction formate + NAD(+) = CO2 + NADH. Its function is as follows. Catalyzes the NAD(+)-dependent oxidation of formate to carbon dioxide. Involved in the cell stress response. Involved in formate-dependent oxygen uptake coupled to ATP synthesis. This is Formate dehydrogenase, mitochondrial from Solanum tuberosum (Potato).